The sequence spans 250 residues: UDP-2,3-diacylglucosamine hydrolase (250 aa).

Mn(2+) contacts are provided by D8, H10, D41, N79, and H114. 79 to 80 (NR) lines the substrate pocket. Residues D122, S160, D172, Q175, and H203 each contribute to the substrate site. Positions 203 and 205 each coordinate Mn(2+).

The protein belongs to the LpxH family. Requires Mn(2+) as cofactor.

The protein localises to the cell inner membrane. The enzyme catalyses UDP-2-N,3-O-bis[(3R)-3-hydroxytetradecanoyl]-alpha-D-glucosamine + H2O = 2-N,3-O-bis[(3R)-3-hydroxytetradecanoyl]-alpha-D-glucosaminyl 1-phosphate + UMP + 2 H(+). Its pathway is glycolipid biosynthesis; lipid IV(A) biosynthesis; lipid IV(A) from (3R)-3-hydroxytetradecanoyl-[acyl-carrier-protein] and UDP-N-acetyl-alpha-D-glucosamine: step 4/6. Its function is as follows. Hydrolyzes the pyrophosphate bond of UDP-2,3-diacylglucosamine to yield 2,3-diacylglucosamine 1-phosphate (lipid X) and UMP by catalyzing the attack of water at the alpha-P atom. Involved in the biosynthesis of lipid A, a phosphorylated glycolipid that anchors the lipopolysaccharide to the outer membrane of the cell. This is UDP-2,3-diacylglucosamine hydrolase from Xylella fastidiosa (strain M12).